Reading from the N-terminus, the 284-residue chain is Bifunctional protein FolD (284 aa).

NADP(+) is bound by residues Gly163 to Ser165, Ser188, and Ile229.

The protein belongs to the tetrahydrofolate dehydrogenase/cyclohydrolase family. As to quaternary structure, homodimer.

The catalysed reaction is (6R)-5,10-methylene-5,6,7,8-tetrahydrofolate + NADP(+) = (6R)-5,10-methenyltetrahydrofolate + NADPH. The enzyme catalyses (6R)-5,10-methenyltetrahydrofolate + H2O = (6R)-10-formyltetrahydrofolate + H(+). The protein operates within one-carbon metabolism; tetrahydrofolate interconversion. Catalyzes the oxidation of 5,10-methylenetetrahydrofolate to 5,10-methenyltetrahydrofolate and then the hydrolysis of 5,10-methenyltetrahydrofolate to 10-formyltetrahydrofolate. This Campylobacter hominis (strain ATCC BAA-381 / DSM 21671 / CCUG 45161 / LMG 19568 / NCTC 13146 / CH001A) protein is Bifunctional protein FolD.